The primary structure comprises 154 residues: RxLR effector protein PexRD24 (154 aa).

An N-terminal signal peptide occupies residues 1–22 (MHSSLLWLGAVVALLAVNNVTA). The RxLR-dEER motif lies at 53 to 67 (RSLRAVETSEDEEER). Position 138 (Lys138) is a short sequence motif, PP1c-binding motif.

It belongs to the RxLR effector family. As to quaternary structure, interacts with the potato PP1c family proteins PP1c-1, PP1c-2 and PP1c-3.

It localises to the secreted. The protein resides in the host nucleus. Its subcellular location is the host nucleoplasm. The protein localises to the host nucleolus. Its function is as follows. Effector that interacts with isoforms of host protein phosphatase type 1c (PP1c), mimicking a regulatory subunit and causing their re-localization within the host nucleus. The holoenzymes formed with PP1c isoforms act to promote late blight by attenuating jasmonic acid (JA)- and salicylic acid (SA)-mediated transcriptional responses of the host plant. This Phytophthora infestans (strain T30-4) (Potato late blight agent) protein is RxLR effector protein PexRD24.